The primary structure comprises 428 residues: Serine--tRNA ligase (428 aa).

An L-serine-binding site is contributed by 235 to 237 (TAE). 266 to 268 (RSE) contributes to the ATP binding site. Glu289 serves as a coordination point for L-serine. 353–356 (EISS) serves as a coordination point for ATP. Ser389 is a binding site for L-serine.

It belongs to the class-II aminoacyl-tRNA synthetase family. Type-1 seryl-tRNA synthetase subfamily. As to quaternary structure, homodimer. The tRNA molecule binds across the dimer.

The protein resides in the cytoplasm. The catalysed reaction is tRNA(Ser) + L-serine + ATP = L-seryl-tRNA(Ser) + AMP + diphosphate + H(+). It catalyses the reaction tRNA(Sec) + L-serine + ATP = L-seryl-tRNA(Sec) + AMP + diphosphate + H(+). The protein operates within aminoacyl-tRNA biosynthesis; selenocysteinyl-tRNA(Sec) biosynthesis; L-seryl-tRNA(Sec) from L-serine and tRNA(Sec): step 1/1. Functionally, catalyzes the attachment of serine to tRNA(Ser). Is also able to aminoacylate tRNA(Sec) with serine, to form the misacylated tRNA L-seryl-tRNA(Sec), which will be further converted into selenocysteinyl-tRNA(Sec). This is Serine--tRNA ligase from Shewanella baltica (strain OS185).